Consider the following 254-residue polypeptide: 5-oxoprolinase subunit A (254 aa).

Belongs to the LamB/PxpA family. Forms a complex composed of PxpA, PxpB and PxpC.

It carries out the reaction 5-oxo-L-proline + ATP + 2 H2O = L-glutamate + ADP + phosphate + H(+). In terms of biological role, catalyzes the cleavage of 5-oxoproline to form L-glutamate coupled to the hydrolysis of ATP to ADP and inorganic phosphate. The polypeptide is 5-oxoprolinase subunit A (Bacillus mycoides (strain KBAB4) (Bacillus weihenstephanensis)).